Consider the following 131-residue polypeptide: Profilin-10 (131 aa).

Cys-13 and Cys-115 are disulfide-bonded. The short motif at 81–97 (AVIRGKKGAGGITIKKT) is the Involved in PIP2 interaction element. At Thr-111 the chain carries Phosphothreonine.

The protein belongs to the profilin family. In terms of assembly, occurs in many kinds of cells as a complex with monomeric actin in a 1:1 ratio. Post-translationally, phosphorylated by MAP kinases.

The protein localises to the cytoplasm. Its subcellular location is the cytoskeleton. Its function is as follows. Binds to actin and affects the structure of the cytoskeleton. At high concentrations, profilin prevents the polymerization of actin, whereas it enhances it at low concentrations. This is Profilin-10 from Phleum pratense (Common timothy).